Reading from the N-terminus, the 186-residue chain is Potassium-transporting ATPase KdpC subunit (186 aa).

The chain crosses the membrane as a helical span at residues 9-29 (AAVVLFGGCLLVLGLLYPLAM).

The protein belongs to the KdpC family. As to quaternary structure, the system is composed of three essential subunits: KdpA, KdpB and KdpC.

It is found in the cell membrane. Functionally, part of the high-affinity ATP-driven potassium transport (or Kdp) system, which catalyzes the hydrolysis of ATP coupled with the electrogenic transport of potassium into the cytoplasm. This subunit acts as a catalytic chaperone that increases the ATP-binding affinity of the ATP-hydrolyzing subunit KdpB by the formation of a transient KdpB/KdpC/ATP ternary complex. This chain is Potassium-transporting ATPase KdpC subunit, found in Methanosphaerula palustris (strain ATCC BAA-1556 / DSM 19958 / E1-9c).